The following is a 352-amino-acid chain: Quinolinate synthase (352 aa).

Residues His55 and Ser72 each contribute to the iminosuccinate site. Residue Cys117 participates in [4Fe-4S] cluster binding. Residues 143 to 145 (YVN) and Ser160 each bind iminosuccinate. [4Fe-4S] cluster is bound at residue Cys204. Residues 230–232 (HPE) and Thr258 each bind iminosuccinate. Cys303 contributes to the [4Fe-4S] cluster binding site.

This sequence belongs to the quinolinate synthase family. Type 2 subfamily. [4Fe-4S] cluster is required as a cofactor.

Its subcellular location is the cytoplasm. It catalyses the reaction iminosuccinate + dihydroxyacetone phosphate = quinolinate + phosphate + 2 H2O + H(+). The protein operates within cofactor biosynthesis; NAD(+) biosynthesis; quinolinate from iminoaspartate: step 1/1. Functionally, catalyzes the condensation of iminoaspartate with dihydroxyacetone phosphate to form quinolinate. The protein is Quinolinate synthase of Mycobacterium leprae (strain Br4923).